The primary structure comprises 198 residues: Imidazoleglycerol-phosphate dehydratase (198 aa).

This sequence belongs to the imidazoleglycerol-phosphate dehydratase family.

The protein localises to the cytoplasm. It carries out the reaction D-erythro-1-(imidazol-4-yl)glycerol 3-phosphate = 3-(imidazol-4-yl)-2-oxopropyl phosphate + H2O. The protein operates within amino-acid biosynthesis; L-histidine biosynthesis; L-histidine from 5-phospho-alpha-D-ribose 1-diphosphate: step 6/9. The polypeptide is Imidazoleglycerol-phosphate dehydratase (Nitratidesulfovibrio vulgaris (strain DP4) (Desulfovibrio vulgaris)).